Consider the following 138-residue polypeptide: ATP synthase epsilon chain (138 aa).

The protein belongs to the ATPase epsilon chain family. F-type ATPases have 2 components, CF(1) - the catalytic core - and CF(0) - the membrane proton channel. CF(1) has five subunits: alpha(3), beta(3), gamma(1), delta(1), epsilon(1). CF(0) has three main subunits: a, b and c.

Its subcellular location is the cell inner membrane. Produces ATP from ADP in the presence of a proton gradient across the membrane. This is ATP synthase epsilon chain from Vesicomyosocius okutanii subsp. Calyptogena okutanii (strain HA).